A 592-amino-acid chain; its full sequence is Arginine--tRNA ligase (592 aa).

A 'HIGH' region motif is present at residues 134-144 (ANPTGPLHVGH).

This sequence belongs to the class-I aminoacyl-tRNA synthetase family. As to quaternary structure, monomer.

It is found in the cytoplasm. It catalyses the reaction tRNA(Arg) + L-arginine + ATP = L-arginyl-tRNA(Arg) + AMP + diphosphate. The sequence is that of Arginine--tRNA ligase from Coxiella burnetii (strain RSA 493 / Nine Mile phase I).